A 494-amino-acid polypeptide reads, in one-letter code: Aspartyl/glutamyl-tRNA(Asn/Gln) amidotransferase subunit B (494 aa).

The protein belongs to the GatB/GatE family. GatB subfamily. Heterotrimer of A, B and C subunits.

It carries out the reaction L-glutamyl-tRNA(Gln) + L-glutamine + ATP + H2O = L-glutaminyl-tRNA(Gln) + L-glutamate + ADP + phosphate + H(+). It catalyses the reaction L-aspartyl-tRNA(Asn) + L-glutamine + ATP + H2O = L-asparaginyl-tRNA(Asn) + L-glutamate + ADP + phosphate + 2 H(+). Functionally, allows the formation of correctly charged Asn-tRNA(Asn) or Gln-tRNA(Gln) through the transamidation of misacylated Asp-tRNA(Asn) or Glu-tRNA(Gln) in organisms which lack either or both of asparaginyl-tRNA or glutaminyl-tRNA synthetases. The reaction takes place in the presence of glutamine and ATP through an activated phospho-Asp-tRNA(Asn) or phospho-Glu-tRNA(Gln). The sequence is that of Aspartyl/glutamyl-tRNA(Asn/Gln) amidotransferase subunit B from Rhizorhabdus wittichii (strain DSM 6014 / CCUG 31198 / JCM 15750 / NBRC 105917 / EY 4224 / RW1) (Sphingomonas wittichii).